The following is a 115-amino-acid chain: Non-specific lipid-transfer protein (115 aa).

The first 24 residues, 1–24, serve as a signal peptide directing secretion; that stretch reads MASSAVIKLALVVALCMAVSVAHA. 4 cysteine pairs are disulfide-bonded: C27–C74, C37–C51, C52–C97, and C72–C111.

The protein belongs to the plant LTP family.

Functionally, plant non-specific lipid-transfer proteins transfer phospholipids as well as galactolipids across membranes. May play a role in wax or cutin deposition in the cell walls of expanding epidermal cells and certain secretory tissues. The chain is Non-specific lipid-transfer protein from Pyrus communis (Pear).